The sequence spans 136 residues: Cystatin-2 (136 aa).

The first 24 residues, 1-24 (MALLRGFLVCSLLLLSCICKEALG), serve as a signal peptide directing secretion. The 96-residue stretch at 29–124 (GGLENASPEE…CTFEVYNIPW (96 aa)) folds into the Cystatin domain. A Secondary area of contact motif is present at residues 73-77 (QIVSG). Cystine bridges form between Cys91-Cys101 and Cys115-Cys135.

Belongs to the cystatin family. In terms of tissue distribution, expressed by the venom gland.

The protein localises to the secreted. Inhibits various C1 cysteine proteases including cathepsin L, papain and cathepsin B. This protein has no toxic activity and its function in the venom is unknown. It may play a role as housekeeping or regulatory protein. The polypeptide is Cystatin-2 (Crotalus adamanteus (Eastern diamondback rattlesnake)).